A 420-amino-acid polypeptide reads, in one-letter code: MTKWKRANPNGTRDYLFEECTLIEEVEQKLRLTFLERGYEEIRTPTIEFYDVFAFQNRPIDEEKMYKFFDEKGRIIVLRPDMTIPLARVIGTQRWDTPLKVTYSGNVFRANESHSGKYNEIVQSGIEVIGIDNVRAEIECVISVIQALQKLKVQSFTIEIGQVQLYKCIVKKLSIQDEEERVLRTYIESKNYAALSNFIGEKKLDRCDETVRLLEKLPRLFGNLEVIEEAEKLASSNEMKMAIARVKEMYETIEMLGYGSYISIDLGMIQHLDYYTGVIFKGYIYEIGEEIVSGGRYDELIGNFGEMLPAVGLAVQVNQIVKALQEQQEPYERNQIDIVIHYELNRLAEAERLRNLLRKDGKNAWLSLFSNLSDTFQFARKNKIGTVVEAKNEYLVEYVWNEKWVVQKEGEASCVTFKLR.

It belongs to the class-II aminoacyl-tRNA synthetase family. HisZ subfamily. As to quaternary structure, heteromultimer composed of HisG and HisZ subunits.

It is found in the cytoplasm. It functions in the pathway amino-acid biosynthesis; L-histidine biosynthesis; L-histidine from 5-phospho-alpha-D-ribose 1-diphosphate: step 1/9. In terms of biological role, required for the first step of histidine biosynthesis. May allow the feedback regulation of ATP phosphoribosyltransferase activity by histidine. This Bacillus cereus (strain B4264) protein is ATP phosphoribosyltransferase regulatory subunit.